Here is a 101-residue protein sequence, read N- to C-terminus: Small ribosomal subunit protein uS14 (101 aa).

Residues 32-67 (SDAKRSDEEREAARLGLQKLPRNANPTRQRNRCEIT) form a disordered region. Basic and acidic residues predominate over residues 33–44 (DAKRSDEEREAA).

The protein belongs to the universal ribosomal protein uS14 family. Part of the 30S ribosomal subunit. Contacts proteins S3 and S10.

Binds 16S rRNA, required for the assembly of 30S particles and may also be responsible for determining the conformation of the 16S rRNA at the A site. The sequence is that of Small ribosomal subunit protein uS14 from Paracidovorax citrulli (strain AAC00-1) (Acidovorax citrulli).